The following is a 507-amino-acid chain: Cytochrome P450 71D2 (507 aa).

2 helical membrane-spanning segments follow: residues 6 to 26 and 447 to 467; these read LPFN…LIYG and ICPG…LLLY. Heme is bound at residue cysteine 448.

It belongs to the cytochrome P450 family.

Its subcellular location is the membrane. The chain is Cytochrome P450 71D2 from Catharanthus roseus (Madagascar periwinkle).